A 171-amino-acid chain; its full sequence is ATP synthase subunit b (171 aa).

The helical transmembrane segment at F2–L22 threads the bilayer.

This sequence belongs to the ATPase B chain family. As to quaternary structure, F-type ATPases have 2 components, F(1) - the catalytic core - and F(0) - the membrane proton channel. F(1) has five subunits: alpha(3), beta(3), gamma(1), delta(1), epsilon(1). F(0) has three main subunits: a(1), b(2) and c(10-14). The alpha and beta chains form an alternating ring which encloses part of the gamma chain. F(1) is attached to F(0) by a central stalk formed by the gamma and epsilon chains, while a peripheral stalk is formed by the delta and b chains.

It is found in the cell inner membrane. Its function is as follows. F(1)F(0) ATP synthase produces ATP from ADP in the presence of a proton or sodium gradient. F-type ATPases consist of two structural domains, F(1) containing the extramembraneous catalytic core and F(0) containing the membrane proton channel, linked together by a central stalk and a peripheral stalk. During catalysis, ATP synthesis in the catalytic domain of F(1) is coupled via a rotary mechanism of the central stalk subunits to proton translocation. Component of the F(0) channel, it forms part of the peripheral stalk, linking F(1) to F(0). This is ATP synthase subunit b from Helicobacter pylori (strain ATCC 700392 / 26695) (Campylobacter pylori).